Here is a 103-residue protein sequence, read N- to C-terminus: Large ribosomal subunit protein bL21 (103 aa).

It belongs to the bacterial ribosomal protein bL21 family. In terms of assembly, part of the 50S ribosomal subunit. Contacts protein L20.

In terms of biological role, this protein binds to 23S rRNA in the presence of protein L20. This Polaromonas sp. (strain JS666 / ATCC BAA-500) protein is Large ribosomal subunit protein bL21.